We begin with the raw amino-acid sequence, 726 residues long: Eukaryotic translation initiation factor 3 subunit B (726 aa).

The interval 1 to 94 is sufficient for interaction with HCR1 and TIF32; sequence MSAALEDIKL…LFVECASPAD (94 aa). The sufficient for interaction with PIC8 stretch occupies residues 1-219; the sequence is MSAALEDIKL…GVVMWGGPHF (219 aa). Residues 37–120 form the RRM domain; sequence QYIVVCGAPV…HRLFIYTMRD (84 aa). WD repeat units lie at residues 142 to 182, 186 to 224, 235 to 283, 331 to 374, 442 to 485, 505 to 549, and 566 to 611; these read FPTS…EESV, RKNW…RLRR, VSPS…LQST, LKVP…MSCK, ELKD…FAPE, ITDK…TDKN, and NSFP…VKEE.

It belongs to the eIF-3 subunit B family. As to quaternary structure, component of the eukaryotic translation initiation factor 3 (eIF-3) complex.

It is found in the cytoplasm. In terms of biological role, RNA-binding component of the eukaryotic translation initiation factor 3 (eIF-3) complex, which is involved in protein synthesis of a specialized repertoire of mRNAs and, together with other initiation factors, stimulates binding of mRNA and methionyl-tRNAi to the 40S ribosome. The eIF-3 complex specifically targets and initiates translation of a subset of mRNAs involved in cell proliferation. This chain is Eukaryotic translation initiation factor 3 subunit B, found in Vanderwaltozyma polyspora (strain ATCC 22028 / DSM 70294 / BCRC 21397 / CBS 2163 / NBRC 10782 / NRRL Y-8283 / UCD 57-17) (Kluyveromyces polysporus).